Here is a 255-residue protein sequence, read N- to C-terminus: Electron transfer flavoprotein subunit beta (255 aa).

Ala2 carries the post-translational modification N-acetylalanine. Residues Ala9, 39–42, Cys66, and 123–134 contribute to the AMP site; these read NPFC and GKQAIDDDCNQT. The tract at residues 183–205 is recognition loop; sequence ADLRLNEPRYATLPNIMKAKKKK. N6,N6,N6-trimethyllysine; by ETFBKMT; alternate is present on Lys200. Lys200 carries the post-translational modification N6-acetyllysine; alternate. The residue at position 200 (Lys200) is an N6-methyllysine; alternate. Lys203 bears the N6,N6,N6-trimethyllysine; by ETFBKMT mark. N6-acetyllysine; alternate is present on Lys210. Position 210 is an N6-succinyllysine; alternate (Lys210). Phosphoserine is present on residues Ser223 and Ser226. Residue Lys238 is modified to N6-acetyllysine. Lys248 bears the N6-acetyllysine; alternate mark. N6-succinyllysine; alternate is present on Lys248.

It belongs to the ETF beta-subunit/FixA family. Heterodimer composed of ETFA and ETFB. Identified in a complex that contains ETFA, ETFB and ETFRF1. Interacts with ACADM. In terms of processing, methylated. Trimethylation at Lys-200 and Lys-203 may negatively regulate the activity in electron transfer from acyl-CoA dehydrogenases.

The protein resides in the mitochondrion matrix. In terms of biological role, heterodimeric electron transfer flavoprotein that accepts electrons from several mitochondrial dehydrogenases, including acyl-CoA dehydrogenases, glutaryl-CoA and sarcosine dehydrogenase. It transfers the electrons to the main mitochondrial respiratory chain via ETF-ubiquinone oxidoreductase. Required for normal mitochondrial fatty acid oxidation and normal amino acid metabolism. ETFB binds an AMP molecule that probably has a purely structural role. This is Electron transfer flavoprotein subunit beta from Mus musculus (Mouse).